The chain runs to 345 residues: Anthranilate phosphoribosyltransferase (345 aa).

5-phospho-alpha-D-ribose 1-diphosphate is bound by residues Gly-83, 86–87, Thr-91, 93–96, 111–119, and Ser-123; these read GD, NIST, and KHGNRNLSS. Position 83 (Gly-83) interacts with anthranilate. Ser-95 is a binding site for Mg(2+). Residue Asn-114 participates in anthranilate binding. Arg-169 provides a ligand contact to anthranilate. Residues Asp-228 and Glu-229 each contribute to the Mg(2+) site.

The protein belongs to the anthranilate phosphoribosyltransferase family. Homodimer. Mg(2+) serves as cofactor.

It carries out the reaction N-(5-phospho-beta-D-ribosyl)anthranilate + diphosphate = 5-phospho-alpha-D-ribose 1-diphosphate + anthranilate. It functions in the pathway amino-acid biosynthesis; L-tryptophan biosynthesis; L-tryptophan from chorismate: step 2/5. In terms of biological role, catalyzes the transfer of the phosphoribosyl group of 5-phosphorylribose-1-pyrophosphate (PRPP) to anthranilate to yield N-(5'-phosphoribosyl)-anthranilate (PRA). In Paracoccus denitrificans (strain Pd 1222), this protein is Anthranilate phosphoribosyltransferase.